Consider the following 277-residue polypeptide: 4-hydroxy-3-prenylphenylpyruvate oxygenase/4-hydroxy-3-prenylbenzoate synthase (277 aa).

It belongs to the aldolase class II family. Homotetramer. The cofactor is Fe(2+).

It carries out the reaction 3-dimethylallyl-4-hydroxyphenylpyruvate + O2 = 3-dimethylallyl-4-hydroxymandelate + CO2. It catalyses the reaction 3-dimethylallyl-4-hydroxymandelate + O2 = 3-dimethylallyl-4-hydroxybenzoate + CO2 + H2O. Its pathway is antibiotic biosynthesis. Its activity is regulated as follows. Activated by ascorbate. Functionally, involved in the biosynthesis of ring A of the aminocoumarin antibiotic clorobiocin. Catalyzes two consecutive oxidative decarboxylations of 3-dimethylallyl-4-hydroxyphenylpyruvate (3DMA-4HPP) to yield 3-dimethylallyl-4-hydroxybenzoate (3DMA-4HB) via the 3-dimethylallyl-4-hydroxymandelic acid (3DMA-4HMA) intermediate. In Streptomyces roseochromogenus subsp. oscitans, this protein is 4-hydroxy-3-prenylphenylpyruvate oxygenase/4-hydroxy-3-prenylbenzoate synthase.